The chain runs to 473 residues: Notchless protein homolog (473 aa).

The tract at residues 9 to 91 (GKTVMCLLTD…VLTIVYQQQA (83 aa)) is ubiquitin-like (UBL) domain. 8 WD repeats span residues 107–146 (GHAEAVLCVSFSPDGKQLASGSGDTTVRLWDLYTETPLFT), 149–188 (GHKNWVLTVAWSPDGKHLVSGSKSGEICCWNPKKGELEGS), 192–236 (GHKK…SIIC), 239–277 (GHTLAVTCVKWGGDGIIYTGSQDCTIKMWETTQGKLIRE), 313–354 (EKQK…QPKK), 358–399 (GHQQ…TVFR), 400–439 (GHVGPVYQVSWSADSRLLLSGSKDSTLKIWEIRTKKLKQD), and 442–473 (GHADEVFAVDWSPDGEKVVSGGKDRVLKLWKG). The short motif at 417–432 (LLSGSKDSTLKIWEIR) is the DWD box element.

Belongs to the NLE1/RSA4 family. As to quaternary structure, associates with the pre-60S ribosomal particle. Constitutively and ubiquitously expressed.

The protein resides in the nucleus. The protein localises to the nucleolus. In terms of biological role, required for female gametophyte development. In Arabidopsis thaliana (Mouse-ear cress), this protein is Notchless protein homolog.